The primary structure comprises 820 residues: Leucine--tRNA ligase (820 aa).

The 'HIGH' region motif lies at 40-51; it reads PYPSGAGLHVGH. The 'KMSKS' region motif lies at 601 to 605; sequence KMSKS. Lys604 is an ATP binding site.

The protein belongs to the class-I aminoacyl-tRNA synthetase family.

Its subcellular location is the cytoplasm. The enzyme catalyses tRNA(Leu) + L-leucine + ATP = L-leucyl-tRNA(Leu) + AMP + diphosphate. The protein is Leucine--tRNA ligase of Chlamydia felis (strain Fe/C-56) (Chlamydophila felis).